A 66-amino-acid chain; its full sequence is Large ribosomal subunit protein bL33 (66 aa).

Belongs to the bacterial ribosomal protein bL33 family.

This chain is Large ribosomal subunit protein bL33, found in Wolbachia pipientis subsp. Culex pipiens (strain wPip).